A 258-amino-acid polypeptide reads, in one-letter code: MSDWLSLAKSNDPHIVVLTMDVHLSYFRDEYNFEEALRLLPFEWQCRVIQKRAHKDKVTALCNRLLQLYGCRLELNTQAIDFTQGKYGKPFVKNTESFNFSMTNGENFVSIIMANLFQTEVGIDLASINDFTSEGDLKIYEDVLSTEEYEKINNQTNLLDMKRLFAFYWSVKECYTKYLGVGLNGDLKIINVSLFSAPLINEAVSTFKLKDITFHSRWVSDNEILTYCFPAQYDFLKPIHAILNVVSVIEGIKTQFLT.

The protein belongs to the P-Pant transferase superfamily. AcpS family.

It catalyses the reaction apo-[ACP] + CoA = holo-[ACP] + adenosine 3',5'-bisphosphate + H(+). Catalyzes the transfer of a 4'-phosphopantetheine moiety from coenzyme A to a serine residue of acceptor proteins, such as alpha-aminoadipate reductase. Necessary for alpha-aminoadipate reductase activity. In Candida glabrata (strain ATCC 2001 / BCRC 20586 / JCM 3761 / NBRC 0622 / NRRL Y-65 / CBS 138) (Yeast), this protein is L-aminoadipate-semialdehyde dehydrogenase-phosphopantetheinyl transferase (LYS5).